We begin with the raw amino-acid sequence, 551 residues long: Rhodopsin kinase grk7-a (551 aa).

Position 36 is a phosphoserine (Ser-36). The RGS domain maps to 57–174; it reads YQSICVEQPI…QNSPFYDRFL (118 aa). Residues 189-451 form the Protein kinase domain; the sequence is FYEFRILGKG…DDDPRKHAFF (263 aa). ATP is bound by residues 195 to 203 and Lys-218; that span reads LGKGGFGEV. Residue Asp-314 is the Proton acceptor of the active site. In terms of domain architecture, AGC-kinase C-terminal spans 452-517; the sequence is KSINFQRLEA…GAIPISWQKE (66 aa). Ser-487 carries the post-translational modification Phosphoserine. A disordered region spans residues 529–551; sequence DPSREATGGGGNSGEKSGVCSIL. Residues 542 to 551 are compositionally biased toward low complexity; sequence GEKSGVCSIL. Residue Cys-548 is modified to Cysteine methyl ester. The S-geranylgeranyl cysteine moiety is linked to residue Cys-548. Residues 549–551 constitute a propeptide, removed in mature form; it reads SIL.

This sequence belongs to the protein kinase superfamily. AGC Ser/Thr protein kinase family. GPRK subfamily. Post-translationally, autophosphorylated in vitro at Ser-487. Phosphorylation at Ser-36 is regulated by light and activated by cAMP.

The protein localises to the membrane. The catalysed reaction is L-threonyl-[rhodopsin] + ATP = O-phospho-L-threonyl-[rhodopsin] + ADP + H(+). It carries out the reaction L-seryl-[rhodopsin] + ATP = O-phospho-L-seryl-[rhodopsin] + ADP + H(+). Functionally, retina-specific kinase involved in the shutoff of the photoresponse and adaptation to changing light conditions via cone opsin phosphorylation, including rhodopsin (RHO). The sequence is that of Rhodopsin kinase grk7-a (grk7-a) from Xenopus laevis (African clawed frog).